The sequence spans 361 residues: Mannose-1-phosphate guanyltransferase (361 aa).

It belongs to the transferase hexapeptide repeat family.

It localises to the cytoplasm. The catalysed reaction is alpha-D-mannose 1-phosphate + GTP + H(+) = GDP-alpha-D-mannose + diphosphate. It functions in the pathway nucleotide-sugar biosynthesis; GDP-alpha-D-mannose biosynthesis; GDP-alpha-D-mannose from alpha-D-mannose 1-phosphate (GTP route): step 1/1. Involved in cell wall synthesis where it is required for glycosylation. Involved in cell cycle progression through cell-size checkpoint. In Kluyveromyces lactis (strain ATCC 8585 / CBS 2359 / DSM 70799 / NBRC 1267 / NRRL Y-1140 / WM37) (Yeast), this protein is Mannose-1-phosphate guanyltransferase (MPG1).